The primary structure comprises 172 residues: Adenine phosphoribosyltransferase (172 aa).

It belongs to the purine/pyrimidine phosphoribosyltransferase family. Homodimer.

It is found in the cytoplasm. The catalysed reaction is AMP + diphosphate = 5-phospho-alpha-D-ribose 1-diphosphate + adenine. It participates in purine metabolism; AMP biosynthesis via salvage pathway; AMP from adenine: step 1/1. Its function is as follows. Catalyzes a salvage reaction resulting in the formation of AMP, that is energically less costly than de novo synthesis. The polypeptide is Adenine phosphoribosyltransferase (Streptococcus pyogenes serotype M12 (strain MGAS9429)).